The following is a 241-amino-acid chain: Proteasome subunit alpha (241 aa).

Belongs to the peptidase T1A family. The 20S proteasome core is composed of 14 alpha and 14 beta subunits that assemble into four stacked heptameric rings, resulting in a barrel-shaped structure. The two inner rings, each composed of seven catalytic beta subunits, are sandwiched by two outer rings, each composed of seven alpha subunits. The catalytic chamber with the active sites is on the inside of the barrel. Has a gated structure, the ends of the cylinder being occluded by the N-termini of the alpha-subunits. Is capped by the proteasome-associated ATPase, ARC.

It is found in the cytoplasm. Its pathway is protein degradation; proteasomal Pup-dependent pathway. Its activity is regulated as follows. The formation of the proteasomal ATPase ARC-20S proteasome complex, likely via the docking of the C-termini of ARC into the intersubunit pockets in the alpha-rings, may trigger opening of the gate for substrate entry. Interconversion between the open-gate and close-gate conformations leads to a dynamic regulation of the 20S proteasome proteolysis activity. Component of the proteasome core, a large protease complex with broad specificity involved in protein degradation. The polypeptide is Proteasome subunit alpha (Parafrankia sp. (strain EAN1pec)).